A 470-amino-acid chain; its full sequence is Neuraminidase (470 aa).

The Intravirion portion of the chain corresponds to 1–14 (MNPNQKIITIGSAS). Residues 11–32 (GSASLGLVFLNVILHVVSITVT) form an involved in apical transport and lipid raft association region. Residues 15 to 35 (LGLVFLNVILHVVSITVTVLV) traverse the membrane as a helical segment. Positions 32 to 86 (TVLVLSNNVTGPNCNGTIIREYNGTVRIERITQWYNTNIIEYIERPSNEYYMSNT) are hypervariable stalk region. Over 36-470 (LSNNVTGPNC…AILPFDIDKM (435 aa)) the chain is Virion surface. N-linked (GlcNAc...) asparagine; by host glycosylation is found at asparagine 39, asparagine 46, and asparagine 54. Residues 89-470 (LCEAQGFAPF…AILPFDIDKM (382 aa)) form a head of neuraminidase region. Intrachain disulfides connect cysteine 90–cysteine 417, cysteine 122–cysteine 127, cysteine 182–cysteine 229, cysteine 231–cysteine 236, cysteine 277–cysteine 290, cysteine 279–cysteine 288, cysteine 316–cysteine 335, and cysteine 421–cysteine 446. Residue arginine 116 participates in substrate binding. Asparagine 144 carries an N-linked (GlcNAc...) asparagine; by host glycan. Catalysis depends on aspartate 149, which acts as the Proton donor/acceptor. Arginine 150 lines the substrate pocket. 275–276 (EE) contributes to the substrate binding site. Residue arginine 291 participates in substrate binding. Aspartate 292 contributes to the Ca(2+) binding site. N-linked (GlcNAc...) asparagine; by host glycosylation is present at asparagine 293. Residues glycine 296 and aspartate 322 each coordinate Ca(2+). Residue arginine 368 coordinates substrate. Residue asparagine 398 is glycosylated (N-linked (GlcNAc...) asparagine; by host). The Nucleophile role is filled by tyrosine 402.

Belongs to the glycosyl hydrolase 34 family. In terms of assembly, homotetramer. Ca(2+) is required as a cofactor. In terms of processing, N-glycosylated.

The protein resides in the virion membrane. It localises to the host apical cell membrane. It carries out the reaction Hydrolysis of alpha-(2-&gt;3)-, alpha-(2-&gt;6)-, alpha-(2-&gt;8)- glycosidic linkages of terminal sialic acid residues in oligosaccharides, glycoproteins, glycolipids, colominic acid and synthetic substrates.. Its activity is regulated as follows. Inhibited by the neuraminidase inhibitors zanamivir (Relenza) and oseltamivir (Tamiflu). These drugs interfere with the release of progeny virus from infected cells and are effective against all influenza strains. Resistance to neuraminidase inhibitors is quite rare. Functionally, catalyzes the removal of terminal sialic acid residues from viral and cellular glycoconjugates. Cleaves off the terminal sialic acids on the glycosylated HA during virus budding to facilitate virus release. Additionally helps virus spread through the circulation by further removing sialic acids from the cell surface. These cleavages prevent self-aggregation and ensure the efficient spread of the progeny virus from cell to cell. Otherwise, infection would be limited to one round of replication. Described as a receptor-destroying enzyme because it cleaves a terminal sialic acid from the cellular receptors. May facilitate viral invasion of the upper airways by cleaving the sialic acid moieties on the mucin of the airway epithelial cells. Likely to plays a role in the budding process through its association with lipid rafts during intracellular transport. May additionally display a raft-association independent effect on budding. Plays a role in the determination of host range restriction on replication and virulence. Sialidase activity in late endosome/lysosome traffic seems to enhance virus replication. This chain is Neuraminidase, found in Aves (Horse).